We begin with the raw amino-acid sequence, 415 residues long: Peptide chain release factor subunit 1 (415 aa).

The protein belongs to the eukaryotic release factor 1 family. Heterodimer of two subunits, one of which binds GTP.

It localises to the cytoplasm. In terms of biological role, directs the termination of nascent peptide synthesis (translation) in response to the termination codons UAA, UAG and UGA. The chain is Peptide chain release factor subunit 1 from Methanosarcina mazei (strain ATCC BAA-159 / DSM 3647 / Goe1 / Go1 / JCM 11833 / OCM 88) (Methanosarcina frisia).